The chain runs to 189 residues: Adenine phosphoribosyltransferase (189 aa).

The protein belongs to the purine/pyrimidine phosphoribosyltransferase family. In terms of assembly, homodimer.

The protein localises to the cytoplasm. The catalysed reaction is AMP + diphosphate = 5-phospho-alpha-D-ribose 1-diphosphate + adenine. It functions in the pathway purine metabolism; AMP biosynthesis via salvage pathway; AMP from adenine: step 1/1. Its function is as follows. Catalyzes a salvage reaction resulting in the formation of AMP, that is energically less costly than de novo synthesis. The polypeptide is Adenine phosphoribosyltransferase (Frankia alni (strain DSM 45986 / CECT 9034 / ACN14a)).